Reading from the N-terminus, the 85-residue chain is Homeobox protein knotted-1-like 4 (85 aa).

The ELK domain maps to 1 to 21 (ELKYQLLKKYSGYLSSLRQEF). Residues 22-85 (SKKKKKGKLP…NQRKRHWKPS (64 aa)) constitute a DNA-binding region (homeobox; TALE-type).

It belongs to the TALE/KNOX homeobox family. In terms of tissue distribution, strongly expressed in ear inflorescence primordia and shoot meristem. Weakly expressed in embryos. Absent from leaves.

Its subcellular location is the nucleus. Probably binds to the DNA sequence 5'-TGAC-3'. In Zea mays (Maize), this protein is Homeobox protein knotted-1-like 4 (KNOX4).